Here is a 126-residue protein sequence, read N- to C-terminus: Thiocyanate hydrolase subunit alpha (126 aa).

As to quaternary structure, heterododecamer consisting of 4 alpha, 4 beta, and 4 gamma subunits.

The catalysed reaction is thiocyanate + H2O + 2 H(+) = carbonyl sulfide + NH4(+). Its pathway is organosulfur degradation; thiocyanate degradation. Functionally, involved in the degradation of thiocyanate. The chain is Thiocyanate hydrolase subunit alpha (scnA) from Thiobacillus thioparus.